A 545-amino-acid chain; its full sequence is CTP synthase (545 aa).

The amidoligase domain stretch occupies residues 1-266; the sequence is MTTNYIFVTG…DDYICKRFSL (266 aa). Serine 14 provides a ligand contact to CTP. UTP is bound at residue serine 14. ATP-binding positions include 15 to 20 and aspartate 72; that span reads SLGKGI. Mg(2+)-binding residues include aspartate 72 and glutamate 140. Residues 147–149, 187–192, and lysine 223 contribute to the CTP site; these read DIE and KTKPTQ. UTP-binding positions include 187 to 192 and lysine 223; that span reads KTKPTQ. 239 to 241 provides a ligand contact to ATP; that stretch reads KDV. One can recognise a Glutamine amidotransferase type-1 domain in the interval 291–542; the sequence is TIGMVGKYIE…VKAASEHQKR (252 aa). Glycine 352 provides a ligand contact to L-glutamine. Cysteine 379 acts as the Nucleophile; for glutamine hydrolysis in catalysis. L-glutamine-binding positions include 380–383, glutamate 403, and arginine 470; that span reads LGMQ. Residues histidine 515 and glutamate 517 contribute to the active site.

It belongs to the CTP synthase family. As to quaternary structure, homotetramer.

It carries out the reaction UTP + L-glutamine + ATP + H2O = CTP + L-glutamate + ADP + phosphate + 2 H(+). It catalyses the reaction L-glutamine + H2O = L-glutamate + NH4(+). The enzyme catalyses UTP + NH4(+) + ATP = CTP + ADP + phosphate + 2 H(+). The protein operates within pyrimidine metabolism; CTP biosynthesis via de novo pathway; CTP from UDP: step 2/2. Its activity is regulated as follows. Allosterically activated by GTP, when glutamine is the substrate; GTP has no effect on the reaction when ammonia is the substrate. The allosteric effector GTP functions by stabilizing the protein conformation that binds the tetrahedral intermediate(s) formed during glutamine hydrolysis. Inhibited by the product CTP, via allosteric rather than competitive inhibition. Its function is as follows. Catalyzes the ATP-dependent amination of UTP to CTP with either L-glutamine or ammonia as the source of nitrogen. Regulates intracellular CTP levels through interactions with the four ribonucleotide triphosphates. The sequence is that of CTP synthase from Salmonella schwarzengrund (strain CVM19633).